We begin with the raw amino-acid sequence, 155 residues long: Deoxyuridine 5'-triphosphate nucleotidohydrolase (155 aa).

Substrate is bound by residues 74 to 76, N87, and 91 to 93; these read RSG and LID.

This sequence belongs to the dUTPase family. The cofactor is Mg(2+).

It carries out the reaction dUTP + H2O = dUMP + diphosphate + H(+). Its pathway is pyrimidine metabolism; dUMP biosynthesis; dUMP from dCTP (dUTP route): step 2/2. In terms of biological role, this enzyme is involved in nucleotide metabolism: it produces dUMP, the immediate precursor of thymidine nucleotides and it decreases the intracellular concentration of dUTP so that uracil cannot be incorporated into DNA. The protein is Deoxyuridine 5'-triphosphate nucleotidohydrolase of Xylella fastidiosa (strain M12).